The primary structure comprises 477 residues: Aspartyl/glutamyl-tRNA(Asn/Gln) amidotransferase subunit B (477 aa).

Belongs to the GatB/GatE family. GatB subfamily. In terms of assembly, heterotrimer of A, B and C subunits.

It catalyses the reaction L-glutamyl-tRNA(Gln) + L-glutamine + ATP + H2O = L-glutaminyl-tRNA(Gln) + L-glutamate + ADP + phosphate + H(+). The enzyme catalyses L-aspartyl-tRNA(Asn) + L-glutamine + ATP + H2O = L-asparaginyl-tRNA(Asn) + L-glutamate + ADP + phosphate + 2 H(+). Its function is as follows. Allows the formation of correctly charged Asn-tRNA(Asn) or Gln-tRNA(Gln) through the transamidation of misacylated Asp-tRNA(Asn) or Glu-tRNA(Gln) in organisms which lack either or both of asparaginyl-tRNA or glutaminyl-tRNA synthetases. The reaction takes place in the presence of glutamine and ATP through an activated phospho-Asp-tRNA(Asn) or phospho-Glu-tRNA(Gln). The polypeptide is Aspartyl/glutamyl-tRNA(Asn/Gln) amidotransferase subunit B (Lactococcus lactis subsp. cremoris (strain MG1363)).